Reading from the N-terminus, the 396-residue chain is Adenosine 3'-phospho 5'-phosphosulfate transporter 2 (396 aa).

Positions Asn22–Ser42 are disordered. The span at Ala27–Ser42 shows a compositional bias: polar residues. Phosphoserine occurs at positions 37 and 40. The N-linked (GlcNAc...) asparagine glycan is linked to Asn57. The next 10 membrane-spanning stretches (helical) occupy residues Cys66–Val86, Pro91–Glu111, Leu140–Leu160, Pro163–Ile183, Gly189–Ala209, Asn216–Gly236, Val253–Gly273, Phe290–Leu310, Ile318–Phe338, and Phe342–Tyr362.

Belongs to the nucleotide-sugar transporter family. SLC35B subfamily.

The protein localises to the golgi apparatus membrane. Its function is as follows. Mediates the transport of adenosine 3'-phospho 5'-phosphosulfate (PAPS), from cytosol into Golgi. PAPS is a universal sulfuryl donor for sulfation events that take place in the Golgi. Essential for viability. Involved in glycosaminoglycan synthesis and the subsequent signaling. May be involved in hh and dpp signaling by controlling the sulfation of heparan sulfate (HS). This is Adenosine 3'-phospho 5'-phosphosulfate transporter 2 (Papst2) from Drosophila melanogaster (Fruit fly).